Here is a 340-residue protein sequence, read N- to C-terminus: MSVTIALDAMGGDHGPQVVVPAALKVLAEMINVKLILIGDRDLLNGLVAIHRGELGTRLTIQHASQKVEMDEAPSQALRAKKDSSMRIAINLVKSRKADACVSAGNTGALMAIARFVLKTLPGIDRPAIVSALPTIRGHCYMLDLGANVDSSAQNLYQFALMGSVLASAIDNIKEPSVGLLNIGSEIIKGNERIKEAGRMLSQSHLNYVGFVEGNDVYEGCVDVVVCDGFVGNVALKSSEGVARMVRHYLRESFQRNYLTRFAGFLALPVLKAFHQRMDPRRYNGANLLGLNGVVIKSHGGADITAFAHAIRIAVIEARKDVPQHISAHLEPWLSEGQVV.

This sequence belongs to the PlsX family. As to quaternary structure, homodimer. Probably interacts with PlsY.

The protein localises to the cytoplasm. It catalyses the reaction a fatty acyl-[ACP] + phosphate = an acyl phosphate + holo-[ACP]. The protein operates within lipid metabolism; phospholipid metabolism. Catalyzes the reversible formation of acyl-phosphate (acyl-PO(4)) from acyl-[acyl-carrier-protein] (acyl-ACP). This enzyme utilizes acyl-ACP as fatty acyl donor, but not acyl-CoA. This Nitrosococcus oceani (strain ATCC 19707 / BCRC 17464 / JCM 30415 / NCIMB 11848 / C-107) protein is Phosphate acyltransferase.